Consider the following 784-residue polypeptide: Cell wall protein Lmo0130 (784 aa).

The first 34 residues, Met-1–Ala-34, serve as a signal peptide directing secretion. The disordered stretch occupies residues Ala-690–Thr-761. Residues Gly-697 to Gly-729 are compositionally biased toward gly residues. Residues Gly-730–Gly-759 show a composition bias toward low complexity. The LPXTG sorting signal motif lies at Leu-755–Gly-759. Pentaglycyl murein peptidoglycan amidated threonine is present on Thr-758. Residues Gly-759–Ser-784 constitute a propeptide, removed by sortase A.

Its subcellular location is the secreted. The protein localises to the cell wall. This Listeria monocytogenes serovar 1/2a (strain ATCC BAA-679 / EGD-e) protein is Cell wall protein Lmo0130.